The primary structure comprises 569 residues: Arginine--tRNA ligase (569 aa).

Residues 123 to 133 (ANPNGPLHVGH) carry the 'HIGH' region motif.

It belongs to the class-I aminoacyl-tRNA synthetase family.

The protein resides in the cytoplasm. It carries out the reaction tRNA(Arg) + L-arginine + ATP = L-arginyl-tRNA(Arg) + AMP + diphosphate. This is Arginine--tRNA ligase from Methanosarcina barkeri (strain Fusaro / DSM 804).